Here is a 46-residue protein sequence, read N- to C-terminus: Osteocalcin 2 (46 aa).

One can recognise a Gla domain in the interval 1-43 (AVPAGTLSPLQMESLREVCEVNVACDEMADTAGIVAAYTXFYG). Threonine 6 carries the phosphothreonine modification. 4 residues coordinate Ca(2+): glutamate 13, glutamate 17, glutamate 20, and aspartate 26. 4-carboxyglutamate occurs at positions 13, 17, and 20. Cysteine 19 and cysteine 25 are oxidised to a cystine. Glutamate 27 bears the 4-carboxyglutamate mark.

The protein belongs to the osteocalcin/matrix Gla protein family. Post-translationally, gamma-carboxyglutamate residues are formed by vitamin K dependent carboxylation by GGCX. These residues are essential for the binding of calcium.

It is found in the secreted. In terms of biological role, the carboxylated form is one of the main organic components of the bone matrix, which constitutes 1-2% of the total bone protein. The carboxylated form binds strongly to apatite and calcium. The sequence is that of Osteocalcin 2 from Solea senegalensis (Senegalese sole).